The following is a 329-amino-acid chain: Prostaglandin reductase 1 (329 aa).

Threonine 18 carries the post-translational modification Phosphothreonine. Serine 20 bears the Phosphoserine mark. Residues 152 to 155 (GAVG), lysine 178, tyrosine 193, asparagine 217, 239 to 245 (CGAISVY), 270 to 272 (FIV), and asparagine 321 each bind NADP(+). Residue lysine 178 is modified to N6-(2-hydroxyisobutyryl)lysine; alternate. N6-acetyllysine; alternate is present on lysine 178.

The protein belongs to the NADP-dependent oxidoreductase L4BD family. In terms of assembly, monomer or homodimer. In terms of tissue distribution, detected in small intestine, kidney, liver, spleen and stomach (at protein level). Detected in small intestine, kidney and liver.

It is found in the cytoplasm. The enzyme catalyses 13,14-dihydro-15-oxo-prostaglandin E1 + NADP(+) = 15-oxoprostaglandin E1 + NADPH + H(+). The catalysed reaction is 13,14-dihydro-15-oxo-prostaglandin E2 + NAD(+) = 15-oxoprostaglandin E2 + NADH + H(+). It carries out the reaction 13,14-dihydro-15-oxo-prostaglandin F1alpha + NADP(+) = 15-oxoprostaglandin F1alpha + NADPH + H(+). It catalyses the reaction 13,14-dihydro-15-oxo-PGF2alpha + NADP(+) = 15-oxoprostaglandin F2alpha + NADPH + H(+). The enzyme catalyses leukotriene B4 + NADP(+) = 12-oxo-leukotriene B4 + NADPH + H(+). The catalysed reaction is 20-hydroxy-leukotriene B4 + NADP(+) = 12-oxo-20-hydroxy-leukotriene B4 + NADPH + H(+). It carries out the reaction 6-trans-leukotriene B4 + NADP(+) = 12-oxo-(5S)-hydroxy-(6E,8E,10E,14Z)-eicosatetraenoate + NADPH + H(+). It catalyses the reaction (5S,12S)-dihydroxy-(6E,10E,12E,14Z)-eicosatetraenoate + NADP(+) = 12-oxo-(5S)-hydroxy-(6E,8E,10E,14Z)-eicosatetraenoate + NADPH + H(+). The enzyme catalyses an n-alkanal + NADP(+) = an alk-2-enal + NADPH + H(+). The catalysed reaction is hexanal + NADP(+) = (E)-hex-2-enal + NADPH + H(+). It carries out the reaction octanal + NADP(+) = (2E)-octenal + NADPH + H(+). It catalyses the reaction decanal + NADP(+) = (2E)-decenal + NADPH + H(+). The enzyme catalyses dodecanal + NADP(+) = (2E)-dodecenal + NADPH + H(+). The catalysed reaction is 4-hydroxynonanal + NADP(+) = (E)-4-hydroxynon-2-enal + NADPH + H(+). It carries out the reaction pentan-2-one + NADP(+) = (E)-pent-3-en-2-one + NADPH + H(+). It catalyses the reaction nonan-2-one + NADP(+) = (3E)-nonen-2-one + NADPH + H(+). Its function is as follows. NAD(P)H-dependent oxidoreductase involved in metabolic inactivation of pro- and anti-inflammatory eicosanoids: prostaglandins (PG), leukotrienes (LT) and lipoxins (LX). Catalyzes with high efficiency the reduction of the 13,14 double bond of 15-oxoPGs, including 15-oxo-PGE1, 15-oxo-PGE2, 15-oxo-PGF1-alpha and 15-oxo-PGF2-alpha. Catalyzes with lower efficiency the oxidation of the hydroxyl group at C12 of LTB4 and its derivatives, converting them into biologically less active 12-oxo-LTB4 metabolites. Reduces 15-oxo-LXA4 to 13,14 dihydro-15-oxo-LXA4, enhancing neutrophil recruitment at the inflammatory site. Plays a role in metabolic detoxification of alkenals and ketones. Reduces alpha,beta-unsaturated alkenals and ketones, particularly those with medium-chain length, showing highest affinity toward (2E)-decenal and (3E)-3-nonen-2-one. May inactivate 4-hydroxy-2-nonenal, a cytotoxic lipid constituent of oxidized low-density lipoprotein particles. This Cavia porcellus (Guinea pig) protein is Prostaglandin reductase 1 (Ptgr1).